The following is a 66-amino-acid chain: Scarabaecin (66 aa).

The signal sequence occupies residues 1-26 (MKTLTFYTLLLCAALYSNFFDCKAVA). A disulfide bridge links Cys-46 with Cys-57.

The protein localises to the secreted. Functionally, possesses antifungal activity against phytopathogenic fungi such as P.oryzae, R.solani and B.cinerea but not against phytopathogenic bacteria. Shows weak activity against the insect pathogenic fungus B.bassiana and against S.aureus. Binds chitin. The protein is Scarabaecin of Oryctes rhinoceros (Coconut rhinoceros beetle).